A 146-amino-acid chain; its full sequence is Lysozyme C (146 aa).

An N-terminal signal peptide occupies residues 1–16 (SGKYISWEDSCSYLQL). In terms of domain architecture, C-type lysozyme spans 17-146 (QKYERCELAK…LSQWTQGCKL (130 aa)). Disulfide bonds link Cys-22–Cys-144, Cys-46–Cys-132, Cys-81–Cys-97, and Cys-93–Cys-111. Catalysis depends on residues Glu-51 and Asp-69.

The protein belongs to the glycosyl hydrolase 22 family. In terms of tissue distribution, expressed by the skin glands.

The protein localises to the secreted. It catalyses the reaction Hydrolysis of (1-&gt;4)-beta-linkages between N-acetylmuramic acid and N-acetyl-D-glucosamine residues in a peptidoglycan and between N-acetyl-D-glucosamine residues in chitodextrins.. Its function is as follows. Lysozymes have primarily a bacteriolytic function; those in tissues and body fluids are associated with the monocyte-macrophage system and enhance the activity of immunoagents. Has antibacterial activity against the Gram-positive bacterium S.aureus and against the Gram-negative bacterium E.coli with a MIC of 1 uM and 8 uM respectively. No antifungal activity against C.albicans. The sequence is that of Lysozyme C from Bufo gargarizans andrewsi (Andrew's toad).